The chain runs to 342 residues: Protein RecA 1 (342 aa).

68–75 (GNESSGKT) provides a ligand contact to ATP.

The protein belongs to the RecA family.

It is found in the cytoplasm. In terms of biological role, can catalyze the hydrolysis of ATP in the presence of single-stranded DNA, the ATP-dependent uptake of single-stranded DNA by duplex DNA, and the ATP-dependent hybridization of homologous single-stranded DNAs. It interacts with LexA causing its activation and leading to its autocatalytic cleavage. The sequence is that of Protein RecA 1 from Myxococcus xanthus.